A 225-amino-acid polypeptide reads, in one-letter code: Probable iron export ATP-binding protein FetA (225 aa).

The region spanning 8 to 225 (LQLQNVGYLA…EMQEARYELA (218 aa)) is the ABC transporter domain. 40–47 (GPSGCGKS) serves as a coordination point for ATP.

The protein belongs to the ABC transporter superfamily. The complex is composed of two ATP-binding proteins (FetA) and two transmembrane proteins (FetB).

The protein localises to the cell inner membrane. Its function is as follows. Part of the ABC transporter complex FetAB, which is probably involved in iron export and enhances resistance to H(2)O(2)-mediated oxidative stress. Probably responsible for energy coupling to the transport system. This Escherichia coli (strain K12) protein is Probable iron export ATP-binding protein FetA (fetA).